We begin with the raw amino-acid sequence, 163 residues long: MTVKSLHVTAMVKYLLLLILGLAFLRETAAQRVPKEGQTFFQKPESCPSVPEGSLKLDLGIINANQRVPLSRNIERRSTSPWNYTVTWDPNRYPSEVVQAQCRHLGCVNAQGKEDIFMNSVPIQQETLVLRRKHQGCSVSFQLEKLLVTVGCTCVKPLIHHVH.

Residues 1-30 (MTVKSLHVTAMVKYLLLLILGLAFLRETAA) form the signal peptide. N-linked (GlcNAc...) asparagine glycosylation is present at Asn83. 2 disulfides stabilise this stretch: Cys102–Cys152 and Cys107–Cys154.

It belongs to the IL-17 family. Homodimer; disulfide-linked. Heterodimer with IL17A (IL17A-IL17F). Forms complexes with IL17RA and IL17RC receptors with 2:1 binding stoichiometry: two receptor chains for one interleukin molecule. IL17F homodimer forms predominantly complexes with IL17RC homodimer, whereas IL17A-IL17F favors complexes with IL17RA-IL17RC. IL17RA and IL17RC chains cannot distinguish between IL17A and IL17F molecules, potentially enabling the formation of topologically distinct complexes.

The protein localises to the secreted. Effector cytokine of innate and adaptive immune system involved in antimicrobial host defense and maintenance of tissue integrity. IL17A-IL17F signals via IL17RA-IL17RC heterodimeric receptor complex, triggering homotypic interaction of IL17RA and IL17RC chains with TRAF3IP2 adapter through SEFIR domains. This leads to downstream TRAF6-mediated activation of NF-kappa-B and MAPkinase pathways ultimately resulting in transcriptional activation of cytokines, chemokines, antimicrobial peptides and matrix metalloproteinases, with potential strong immune inflammation. IL17A-IL17F is primarily involved in host defense against extracellular bacteria and fungi by inducing neutrophilic inflammation. As signature effector cytokine of T-helper 17 cells (Th17), primarily induces neutrophil activation and recruitment at infection and inflammatory sites. Stimulates the production of antimicrobial beta-defensins DEFB1, DEFB103A, and DEFB104A by mucosal epithelial cells, limiting the entry of microbes through the epithelial barriers. IL17F homodimer can signal via IL17RC homodimeric receptor complex, triggering downstream activation of TRAF6 and NF-kappa-B signaling pathway. Via IL17RC induces transcriptional activation of IL33, a potent cytokine that stimulates group 2 innate lymphoid cells and adaptive T-helper 2 cells involved in pulmonary allergic response to fungi. Likely via IL17RC, promotes sympathetic innervation of peripheral organs by coordinating the communication between gamma-delta T cells and parenchymal cells. Stimulates sympathetic innervation of thermogenic adipose tissue by driving TGFB1 expression. Regulates the composition of intestinal microbiota and immune tolerance by inducing antimicrobial proteins that specifically control the growth of commensal Firmicutes and Bacteroidetes. The chain is Interleukin-17F (IL17F) from Callithrix jacchus (White-tufted-ear marmoset).